The following is a 258-amino-acid chain: Tryptophan synthase alpha chain (258 aa).

Catalysis depends on proton acceptor residues Glu-52 and Asp-63.

This sequence belongs to the TrpA family. Tetramer of two alpha and two beta chains.

The enzyme catalyses (1S,2R)-1-C-(indol-3-yl)glycerol 3-phosphate + L-serine = D-glyceraldehyde 3-phosphate + L-tryptophan + H2O. It participates in amino-acid biosynthesis; L-tryptophan biosynthesis; L-tryptophan from chorismate: step 5/5. The alpha subunit is responsible for the aldol cleavage of indoleglycerol phosphate to indole and glyceraldehyde 3-phosphate. This chain is Tryptophan synthase alpha chain, found in Streptococcus pneumoniae (strain ATCC 700669 / Spain 23F-1).